A 311-amino-acid chain; its full sequence is Ornithine carbamoyltransferase (311 aa).

Residues glutamine 85, arginine 109, and 136–139 (HPCQ) each bind carbamoyl phosphate. L-ornithine-binding positions include asparagine 167, aspartate 231, and 235–236 (SM). Residues 271 to 272 (CL) and arginine 299 contribute to the carbamoyl phosphate site.

This sequence belongs to the aspartate/ornithine carbamoyltransferase superfamily. OTCase family.

Its subcellular location is the cytoplasm. The catalysed reaction is carbamoyl phosphate + L-ornithine = L-citrulline + phosphate + H(+). It functions in the pathway amino-acid biosynthesis; L-arginine biosynthesis; L-arginine from L-ornithine and carbamoyl phosphate: step 1/3. Functionally, reversibly catalyzes the transfer of the carbamoyl group from carbamoyl phosphate (CP) to the N(epsilon) atom of ornithine (ORN) to produce L-citrulline. This is Ornithine carbamoyltransferase (argF) from Geobacillus stearothermophilus (Bacillus stearothermophilus).